The chain runs to 599 residues: RING finger protein unkempt (599 aa).

5 consecutive C3H1-type zinc fingers follow at residues 71 to 100 (YSADNYCTKYDETTGICPEGDECPYLHRTA), 111 to 141 (YYKTCMCVHDTDSRGYCVKNGLHCAFAHGMQ), 194 to 220 (NYKTEPCKRPPRLCRQGYACPQYHNSK), 230 to 264 (KYRSTPCPNVKHGEEWGEPGNCEAGDNCQYCHTRT), and 272 to 300 (IYKSTKCNDVQQAGYCPRSVFCAFAHVEP). Serine 411 carries the post-translational modification Phosphoserine. Residues 556–591 (CMKCEENNRTVTLEPCNHLSICNTCAESVTECPYCQ) form an RING-type zinc finger.

This sequence belongs to the unkempt family. Ubiquitous in most somatic tissues from syncytial embryo through to embryo stage 15. Expression becomes restricted predominantly to the CNS at stages 16 and 17.

The protein localises to the cytoplasm. Essential for late larval/early pupal development. The polypeptide is RING finger protein unkempt (unk) (Drosophila melanogaster (Fruit fly)).